Consider the following 300-residue polypeptide: Ribosomal protein L11 methyltransferase (300 aa).

4 residues coordinate S-adenosyl-L-methionine: threonine 152, glycine 173, aspartate 195, and asparagine 234.

The protein belongs to the methyltransferase superfamily. PrmA family.

The protein localises to the cytoplasm. It carries out the reaction L-lysyl-[protein] + 3 S-adenosyl-L-methionine = N(6),N(6),N(6)-trimethyl-L-lysyl-[protein] + 3 S-adenosyl-L-homocysteine + 3 H(+). In terms of biological role, methylates ribosomal protein L11. This chain is Ribosomal protein L11 methyltransferase, found in Burkholderia cenocepacia (strain ATCC BAA-245 / DSM 16553 / LMG 16656 / NCTC 13227 / J2315 / CF5610) (Burkholderia cepacia (strain J2315)).